An 842-amino-acid polypeptide reads, in one-letter code: Protein P (842 aa).

The interval 1-177 is terminal protein domain (TP); it reads MPLSYQHFRK…FCGSPYSWEQ (177 aa). Residues 178-346 form a spacer region; that stretch reads ELQHGRLVFQ…YCLTHIVNLL (169 aa). A disordered region spans residues 218–274; it reads LKQSRLGLQPQQGSLARGKSGRSGSIRARVPPTTRRSFGVEPSGSGHIDNRASSTSS. A polymerase/reverse transcriptase domain (RT) region spans residues 347-690; that stretch reads EDWGPCTEHG…YLHLYPVARR (344 aa). A Reverse transcriptase domain is found at 357-600; sequence EHNIRIPRTP…YSLNFMGYVI (244 aa). Positions 429, 551, and 552 each coordinate Mg(2+).

This sequence belongs to the hepadnaviridae P protein family.

The enzyme catalyses DNA(n) + a 2'-deoxyribonucleoside 5'-triphosphate = DNA(n+1) + diphosphate. The catalysed reaction is Endonucleolytic cleavage to 5'-phosphomonoester.. Activated by host HSP70 and HSP40 in vitro to be able to bind the epsilon loop of the pgRNA. Because deletion of the RNase H region renders the protein partly chaperone-independent, the chaperones may be needed indirectly to relieve occlusion of the RNA-binding site by this domain. Inhibited by several reverse-transcriptase inhibitors: Lamivudine, Adefovir and Entecavir. In terms of biological role, multifunctional enzyme that converts the viral RNA genome into dsDNA in viral cytoplasmic capsids. This enzyme displays a DNA polymerase activity that can copy either DNA or RNA templates, and a ribonuclease H (RNase H) activity that cleaves the RNA strand of RNA-DNA heteroduplexes in a partially processive 3'- to 5'-endonucleasic mode. Neo-synthesized pregenomic RNA (pgRNA) are encapsidated together with the P protein, and reverse-transcribed inside the nucleocapsid. Initiation of reverse-transcription occurs first by binding the epsilon loop on the pgRNA genome, and is initiated by protein priming, thereby the 5'-end of (-)DNA is covalently linked to P protein. Partial (+)DNA is synthesized from the (-)DNA template and generates the relaxed circular DNA (RC-DNA) genome. After budding and infection, the RC-DNA migrates in the nucleus, and is converted into a plasmid-like covalently closed circular DNA (cccDNA). The activity of P protein does not seem to be necessary for cccDNA generation, and is presumably released from (+)DNA by host nuclear DNA repair machinery. This is Protein P from Hepatitis B virus genotype C subtype adr (isolate Korea/Kim/1989) (HBV-C).